Reading from the N-terminus, the 456-residue chain is Glycosyl hydrolase family 109 protein (456 aa).

The segment at residues 1–31 is a signal peptide (tat-type signal); it reads MKLNRRHFLKTAGLSAAGILTSQLPLSSAEA. NAD(+)-binding positions include 62–63, Asp84, 133–136, 153–154, and Asn182; these read QR, WEWH, and EV. Substrate is bound by residues Tyr211, Arg230, 242–245, and Tyr324; that span reads YPTH. Tyr242 contacts NAD(+).

Belongs to the Gfo/Idh/MocA family. Glycosyl hydrolase 109 subfamily. NAD(+) is required as a cofactor. Predicted to be exported by the Tat system. The position of the signal peptide cleavage has not been experimentally proven.

Glycosidase. In Shewanella pealeana (strain ATCC 700345 / ANG-SQ1), this protein is Glycosyl hydrolase family 109 protein.